The chain runs to 109 residues: Phosphoribosyl-ATP pyrophosphatase (109 aa).

This sequence belongs to the PRA-PH family.

It is found in the cytoplasm. The enzyme catalyses 1-(5-phospho-beta-D-ribosyl)-ATP + H2O = 1-(5-phospho-beta-D-ribosyl)-5'-AMP + diphosphate + H(+). It functions in the pathway amino-acid biosynthesis; L-histidine biosynthesis; L-histidine from 5-phospho-alpha-D-ribose 1-diphosphate: step 2/9. This is Phosphoribosyl-ATP pyrophosphatase from Parvibaculum lavamentivorans (strain DS-1 / DSM 13023 / NCIMB 13966).